The primary structure comprises 315 residues: MACFRVILYLSVIFFVQCVFAAPKGITKVAPENHNFFGRITSYAHPKDVPDPVPMYQQFAALAQQSNCHNYHINISVGDATLLYSWGDNDRNQRLQLFHSKSLGIVASWAGMNPTKINSILGAADVFLVDVDRRYFPHAEKGAKLYKGFQDAYKRVAPTFIKELQYYQELYNEDRVSLTGLSYGAALANIALLHVKKNLKRGSIYRTVAFGLPRVGNQEWANSIDKHADGKFFYVANGNDLVVRAPPRELGYQHPSGQIWINPSNSSKWKFYPGQENVHGANSEFGYSIPDHTGVYFRTEIASLWGHCPATVGKD.

The first 21 residues, 1 to 21 (MACFRVILYLSVIFFVQCVFA), serve as a signal peptide directing secretion. A disulfide bridge links Cys68 with Cys308. N-linked (GlcNAc...) asparagine glycosylation is present at Asn74. The active-site Nucleophile is Ser182. Asp240 is a catalytic residue. A glycan (N-linked (GlcNAc...) asparagine) is linked at Asn265. The active site involves His292.

Belongs to the AB hydrolase superfamily. Lipase family. Class 3 subfamily.

The protein resides in the secreted. The enzyme catalyses a monoacylglycerol + H2O = glycerol + a fatty acid + H(+). It catalyses the reaction a diacylglycerol + H2O = a monoacylglycerol + a fatty acid + H(+). Secreted lipase involved in Dandruff and seborrheic dermatitis (D/SD) probably via lipase-mediated breakdown of sebaceous lipids and release of irritating free fatty acids. Shows activity against monoglyceride and diglyceride substrates and generates free oleic acid from the substrates mono- and diolein. Able to cleave the oleic acid from both the 1 and the 2 position of the glycerol backbone as 1,2 isomers of diolein were converted into oleic acid and glycerol. Due to an absence of fatty acid synthase genes in Malassezia species, secretory lipases are essential for the yeast to generate free fatty acids from degradation of sebum and assimilate them as lipid sources for growth. Plays an essential role at the pathogen-host interface during disease progression. Also performs the reverse reaction to build diacylglycerols from monoacylglycerols. The chain is Secreted mono- and diacylglycerol lipase LIP2 from Malassezia restricta (Seborrheic dermatitis infection agent).